The sequence spans 316 residues: Long form salivary protein D7L1 (316 aa).

An N-terminal signal peptide occupies residues 1 to 23 (MSHTRAVVLAVACLCLILVQVEG). Intrachain disulfides connect Cys40–Cys76, Cys72–Cys131, Cys181–Cys214, and Cys255–Cys266.

This sequence belongs to the PBP/GOBP family.

It localises to the secreted. In terms of biological role, modulates blood feeding of female mosquitoes on vertebrate species by binding and sequestering different mediators involved in the host response, such as biogenic amines and eicosanoids. Binds serotonin, tryptamine, histamine, leukotriene C4, leukotriene D4 and leukotriene E4. Does not bind octopamine, dopamine, noradrenaline, adrenaline and prostaglandin PGF2alpha. This Anopheles atroparvus (European mosquito) protein is Long form salivary protein D7L1.